Consider the following 427-residue polypeptide: MVTSCCSGSMSEAGHILDGLAEHARRASRSLARANAGTRNHALSEAAKALRVRSDEIVAANQKDLAALSEDRNAAFRDRLTLTPERVEAMARGLEDVAGLPDPVGRVLAEWDRPNGLHFRRVATPLGVIGMIYESRPNVGADAAALCIKSGNAVILRGGGESLHSARAIQAAMEDGLRAAGLDEACVQILPSADRALVGAMLQASGKIDLIIPRGGKSLVERVQREARVPVLAHADGLNHTYIHASADPAMARKILLDAKMRRTGICGATETLLIDAAIAPALLPLLVEDLAAKGCTFRADDRARAIVPTLAAASADDFDTEWLDAVLSVAVVDGVEDALDHIARHGSSHTEAIIAEDPEAAAEFLNGTDSAVVMWNASTQFCDGGEFGFGAEIGIATGRMHARGPVGLEQLTCYRYEVIGTGQVRG.

The protein belongs to the gamma-glutamyl phosphate reductase family.

The protein resides in the cytoplasm. It carries out the reaction L-glutamate 5-semialdehyde + phosphate + NADP(+) = L-glutamyl 5-phosphate + NADPH + H(+). It functions in the pathway amino-acid biosynthesis; L-proline biosynthesis; L-glutamate 5-semialdehyde from L-glutamate: step 2/2. Its function is as follows. Catalyzes the NADPH-dependent reduction of L-glutamate 5-phosphate into L-glutamate 5-semialdehyde and phosphate. The product spontaneously undergoes cyclization to form 1-pyrroline-5-carboxylate. The sequence is that of Gamma-glutamyl phosphate reductase from Gluconobacter oxydans (strain 621H) (Gluconobacter suboxydans).